Here is a 250-residue protein sequence, read N- to C-terminus: NAD-dependent protein deacylase (250 aa).

The region spanning 1–250 is the Deacetylase sirtuin-type domain; sequence MIVEVARVLA…VVHEVRRLLQ (250 aa). Residue 20-39 coordinates NAD(+); it reads GAGISAESGVPTFRGKDGLW. Residues Tyr64 and Arg67 each contribute to the substrate site. Residue 98 to 101 participates in NAD(+) binding; sequence QNVD. His116 serves as the catalytic Proton acceptor. Zn(2+) is bound by residues Cys124, Cys127, Cys150, and Cys153. NAD(+)-binding positions include 190–192, 216–218, and Ala234; these read GTS and NVE.

Belongs to the sirtuin family. Class III subfamily. The cofactor is Zn(2+).

It is found in the cytoplasm. The catalysed reaction is N(6)-acetyl-L-lysyl-[protein] + NAD(+) + H2O = 2''-O-acetyl-ADP-D-ribose + nicotinamide + L-lysyl-[protein]. It catalyses the reaction N(6)-succinyl-L-lysyl-[protein] + NAD(+) + H2O = 2''-O-succinyl-ADP-D-ribose + nicotinamide + L-lysyl-[protein]. Its function is as follows. NAD-dependent lysine deacetylase and desuccinylase that specifically removes acetyl and succinyl groups on target proteins. Modulates the activities of several proteins which are inactive in their acylated form. Deacetylates the N-terminal lysine residue of Alba, the major archaeal chromatin protein and that, in turn, increases Alba's DNA binding affinity, thereby repressing transcription. This Pyrococcus abyssi (strain GE5 / Orsay) protein is NAD-dependent protein deacylase.